Consider the following 129-residue polypeptide: Small ribosomal subunit protein uS8c (129 aa).

Belongs to the universal ribosomal protein uS8 family. Part of the 30S ribosomal subunit.

It localises to the plastid. Its subcellular location is the chloroplast. In terms of biological role, one of the primary rRNA binding proteins, it binds directly to 16S rRNA central domain where it helps coordinate assembly of the platform of the 30S subunit. The chain is Small ribosomal subunit protein uS8c (rps8) from Nephroselmis olivacea (Green alga).